The chain runs to 78 residues: Large ribosomal subunit protein bL28 (78 aa).

This sequence belongs to the bacterial ribosomal protein bL28 family.

The sequence is that of Large ribosomal subunit protein bL28 from Prochlorococcus marinus (strain AS9601).